Reading from the N-terminus, the 411-residue chain is Phosphopentomutase (411 aa).

Residues aspartate 14, aspartate 306, histidine 311, aspartate 347, histidine 348, and histidine 359 each contribute to the Mn(2+) site.

The protein belongs to the phosphopentomutase family. Requires Mn(2+) as cofactor.

It localises to the cytoplasm. The catalysed reaction is 2-deoxy-alpha-D-ribose 1-phosphate = 2-deoxy-D-ribose 5-phosphate. It carries out the reaction alpha-D-ribose 1-phosphate = D-ribose 5-phosphate. Its pathway is carbohydrate degradation; 2-deoxy-D-ribose 1-phosphate degradation; D-glyceraldehyde 3-phosphate and acetaldehyde from 2-deoxy-alpha-D-ribose 1-phosphate: step 1/2. Functionally, isomerase that catalyzes the conversion of deoxy-ribose 1-phosphate (dRib-1-P) and ribose 1-phosphate (Rib-1-P) to deoxy-ribose 5-phosphate (dRib-5-P) and ribose 5-phosphate (Rib-5-P), respectively. This chain is Phosphopentomutase, found in Lactococcus lactis subsp. lactis (strain IL1403) (Streptococcus lactis).